The sequence spans 226 residues: Deoxyribose-phosphate aldolase (226 aa).

The Proton donor/acceptor role is filled by E96. The active-site Schiff-base intermediate with acetaldehyde is K157. Residue K185 is the Proton donor/acceptor of the active site.

This sequence belongs to the DeoC/FbaB aldolase family. DeoC type 1 subfamily.

It is found in the cytoplasm. The enzyme catalyses 2-deoxy-D-ribose 5-phosphate = D-glyceraldehyde 3-phosphate + acetaldehyde. It participates in carbohydrate degradation; 2-deoxy-D-ribose 1-phosphate degradation; D-glyceraldehyde 3-phosphate and acetaldehyde from 2-deoxy-alpha-D-ribose 1-phosphate: step 2/2. Its function is as follows. Catalyzes a reversible aldol reaction between acetaldehyde and D-glyceraldehyde 3-phosphate to generate 2-deoxy-D-ribose 5-phosphate. The sequence is that of Deoxyribose-phosphate aldolase from Gloeobacter violaceus (strain ATCC 29082 / PCC 7421).